We begin with the raw amino-acid sequence, 305 residues long: Transcriptional activator protein PfeR (305 aa).

One can recognise a Response regulatory domain in the interval 79–192 (RLLLVEDDPR…ELDARTDALL (114 aa)). The residue at position 128 (D128) is a 4-aspartylphosphate. Residues 200 to 301 (LPLAQRRDTR…VRGQGYLLVE (102 aa)) constitute a DNA-binding region (ompR/PhoB-type).

In terms of processing, phosphorylated by PfeS.

The protein resides in the cytoplasm. In terms of biological role, member of the two-component regulatory system PfeR/PfeS. Activates expression of the ferric enterobactin receptor. The chain is Transcriptional activator protein PfeR (pfeR) from Pseudomonas aeruginosa (strain ATCC 15692 / DSM 22644 / CIP 104116 / JCM 14847 / LMG 12228 / 1C / PRS 101 / PAO1).